A 218-amino-acid polypeptide reads, in one-letter code: ATP synthase subunit a (218 aa).

Transmembrane regions (helical) follow at residues 17–37 (IYST…GIFL), 75–95 (YLPL…SWFI), 104–124 (DLST…IFGI), 162–184 (LFGN…PFLL), and 196–216 (GTIQ…NFVH).

Belongs to the ATPase A chain family. In terms of assembly, F-type ATPases have 2 components, CF(1) - the catalytic core - and CF(0) - the membrane proton channel. CF(1) has five subunits: alpha(3), beta(3), gamma(1), delta(1), epsilon(1). CF(0) has three main subunits: a(1), b(2) and c(9-12). The alpha and beta chains form an alternating ring which encloses part of the gamma chain. CF(1) is attached to CF(0) by a central stalk formed by the gamma and epsilon chains, while a peripheral stalk is formed by the delta and b chains. In this bacterium the a and b subunits are transcribed but do not seem to be translated, thus the ATP synthase consists of the alpha, beta, gamma, delta, epsilon and c subunits.

It localises to the cell membrane. Its function is as follows. Key component of the proton channel; it plays a direct role in the translocation of protons across the membrane. This Moorella thermoacetica (strain ATCC 39073 / JCM 9320) protein is ATP synthase subunit a.